The primary structure comprises 179 residues: ATP synthase subunit b (179 aa).

A helical membrane pass occupies residues 23–43; it reads IFWLIITFGILYVVLSKLILP.

This sequence belongs to the ATPase B chain family. F-type ATPases have 2 components, F(1) - the catalytic core - and F(0) - the membrane proton channel. F(1) has five subunits: alpha(3), beta(3), gamma(1), delta(1), epsilon(1). F(0) has three main subunits: a(1), b(2) and c(10-14). The alpha and beta chains form an alternating ring which encloses part of the gamma chain. F(1) is attached to F(0) by a central stalk formed by the gamma and epsilon chains, while a peripheral stalk is formed by the delta and b chains.

It is found in the cell inner membrane. In terms of biological role, f(1)F(0) ATP synthase produces ATP from ADP in the presence of a proton or sodium gradient. F-type ATPases consist of two structural domains, F(1) containing the extramembraneous catalytic core and F(0) containing the membrane proton channel, linked together by a central stalk and a peripheral stalk. During catalysis, ATP synthesis in the catalytic domain of F(1) is coupled via a rotary mechanism of the central stalk subunits to proton translocation. Functionally, component of the F(0) channel, it forms part of the peripheral stalk, linking F(1) to F(0). The protein is ATP synthase subunit b of Pelagibacter ubique (strain HTCC1062).